A 635-amino-acid chain; its full sequence is Replication factor C small subunit (635 aa).

51-58 is an ATP binding site; it reads GPPGTGKT.

It belongs to the activator 1 small subunits family. RfcS subfamily. As to quaternary structure, heteromultimer composed of small subunits (RfcS) and large subunits (RfcL). In terms of processing, this protein undergoes a protein self splicing that involves a post-translational excision of the intervening region (intein) followed by peptide ligation.

In terms of biological role, part of the RFC clamp loader complex which loads the PCNA sliding clamp onto DNA. This chain is Replication factor C small subunit (rfcS), found in Methanopyrus kandleri (strain AV19 / DSM 6324 / JCM 9639 / NBRC 100938).